A 957-amino-acid polypeptide reads, in one-letter code: Atromentin synthetase (957 aa).

The interval Ser-59–Val-464 is adenylation (A) domain. The region spanning Thr-596–Val-674 is the Carrier domain. The interval Asp-601–Asn-671 is thiolation and peptide carrier (T) domain. Position 633 is an O-(pantetheine 4'-phosphoryl)serine (Ser-633). Residues Pro-697–Ile-947 are thioesterase (TE) domain.

Belongs to the ATP-dependent AMP-binding enzyme family.

It functions in the pathway secondary metabolite biosynthesis. In terms of biological role, the L-tyrosine:2-oxoglutarate aminotransferase atrD and the atromentin synthetase atrA catalyze consecutive steps to turn over L-tyrosine into atromentin, which represents the generic precursor molecule for the entire terphenylquinone and pulvinic acid family of pigments, which are widely distributed secondary metabolites in homobasidiomycetes. The first step is catalyzed by atrD which converts L-tyrosine in to 4-hydroxyphenylpyruvate (4-HPP). Adenylation of two 4-HPP monomers by the atrA adenylation (A) domain, ester bond formation between monomers and atrA, and symmetric C-C-bond formation between two monomers by atrA leads to atromentin. This is Atromentin synthetase from Tapinella panuoides (Oyster rollrim mushroom).